Here is a 354-residue protein sequence, read N- to C-terminus: Rhodopsin (354 aa).

At 1–36 (MNGTEGPNFYVPMSNKTGIVRSPFEYPQYYLAEPWK) the chain is on the extracellular side. Asn2 and Asn15 each carry an N-linked (GlcNAc...) asparagine glycan. A helical transmembrane segment spans residues 37–61 (YSVLAAYMFLLILLGLPINFMTLYV). Residues 62–73 (TIQHKKLRTPLN) lie on the Cytoplasmic side of the membrane. A helical membrane pass occupies residues 74 to 96 (YILLNLAFANHFMVLCGFTITMY). Residues 97-110 (TSLHGYFVFGQTGC) lie on the Extracellular side of the membrane. A disulfide bridge links Cys110 with Cys187. The helical transmembrane segment at 111-133 (YFEGFFATLGGEIALWSLVVLAI) threads the bilayer. A 'Ionic lock' involved in activated form stabilization motif is present at residues 134–136 (ERY). At 134–152 (ERYIVVCKPMSNFRFGENH) the chain is on the cytoplasmic side. Residues 153–173 (AMMGVAFTWIMALACAVPPLF) traverse the membrane as a helical segment. Topologically, residues 174–202 (GWSRYIPEGMQCSCGVDYYTLKPEVNNES) are extracellular. Residues 203–224 (FVIYMFVVHFLIPLIIISFCYG) form a helical membrane-spanning segment. Residues 225-252 (RLVCTVKEAAAQQQESATTQKAEKEVTR) are Cytoplasmic-facing. Residues 253–274 (MVVIMVIFFLICWVPYAYVAFY) traverse the membrane as a helical segment. The Extracellular portion of the chain corresponds to 275 to 286 (IFTHQGSEFGPI). A helical transmembrane segment spans residues 287–308 (FMTVPAFFAKSSAIYNPVIYIM). Lys296 carries the post-translational modification N6-(retinylidene)lysine. The Cytoplasmic segment spans residues 309–354 (LNKQFRNCMITTLCCGKNPFGDEDASSAATSKTEATSVSTSQVSPA). 2 S-palmitoyl cysteine lipidation sites follow: Cys322 and Cys323. A disordered region spans residues 331-354 (EDASSAATSKTEATSVSTSQVSPA). The segment covering 334-354 (SSAATSKTEATSVSTSQVSPA) has biased composition (low complexity).

The protein belongs to the G-protein coupled receptor 1 family. Opsin subfamily. Contains one covalently linked retinal chromophore. Upon light absorption, the covalently bound 11-cis-retinal is converted to all-trans-retinal. After hydrolysis of the Schiff base and release of the covalently bound all-trans-retinal, active rhodopsin is regenerated by binding of a fresh molecule of 11-cis-retinal. Retina. Localized in the ventral part of the retina.

The protein localises to the membrane. It localises to the cell projection. The protein resides in the cilium. It is found in the photoreceptor outer segment. Its function is as follows. Photoreceptor required for image-forming vision at low light intensity. Required for photoreceptor cell viability after birth. May use a mixture of retinal and 3-dehydroretinal as visual pigment. Light-induced isomerization of 11-cis to all-trans retinal triggers a conformational change that activates signaling via G-proteins. Subsequent receptor phosphorylation mediates displacement of the bound G-protein alpha subunit by arrestin and terminates signaling. The polypeptide is Rhodopsin (RHO) (Aquarana catesbeiana (American bullfrog)).